The primary structure comprises 918 residues: MSAPPLLRPPSPLLPAAAAVAAAAAALVPGSGPAPFPAPGAAPAGGISFHLQIGLSREPVLLLQDSSGDYSLAHVREMACSIVDQKFPECGFYGLYDKILLFRHDPASENILQLVKIASDIQEGDLIEVVLSASATFEDFQIRPHALFVHSYRAPAFCDHCGEMLWGLVRQGLKCEGCGLNYHKRCAFKIPNNCSGVRRRRLSNVSLTGLGTVRTASAEFSTSAPDEPLLSPVSPGFEQKSPSESFIGREKRSNSQSYVGRPIQLDKLLMSKVKVPHTFVIHSYTRPTVCQFCKKLLKGLFRQGLQCKDCRFNCHKRCAPKVPNNCLGEVTINGELLSPGAESDVVMEEGSDDNDSERNSGLMDDMDEAMVQDTEMALAEGQSDGAEMQDPDADQEDSNRTISPSTSNNIPLMRVVQSVKHTKRRSSTVMKEGWMVHYTSKDTLRKRHYWRLDSKSITLFQNDTGSRYYKEIPLSEILCLEPAKPSALIPTGANPHCFEITTANVVYYVGENVVNPSSPPPNNSVPPSGIGTDVARMWEVAIQHALMPVIPKGSSVGSGTNSHKDISVSISVSNSQIQENVDISTVYQIFPDEVLGSGQFGIVYGGKHRKTGRDVAIKIIDKLRFPTKQESQLRNEVAILQNLHHPGVVNLECMFETPERVFVVMEKLHGDMLEMILSSEKGRLPEHITKFLITQILVALRHLHFKNIVHCDLKPENVLLASADPFPQVKLCDFGFARIIGEKSFRRSVVGTPAYLAPEVLRNKGYNRSLDMWSVGVIIYVSLSGTFPFNEDEDIHDQIQNAAFMYPPNPWKEISHEAIDLINNLLQVKMRKRYSVDKTLSHPWLQDYQTWLDLRELECRIGERYITHESDDSRWEQYAGEQGLQYPAHLINLSASHGDSPEAEEREMKALSERVSIL.

At Tyr93 the chain carries Phosphotyrosine. The Phorbol-ester/DAG-type 1 zinc finger occupies 144–194 (PHALFVHSYRAPAFCDHCGEMLWGLVRQGLKCEGCGLNYHKRCAFKIPNNC). Phosphoserine is present on residues Ser203, Ser206, Ser217, and Ser221. The Phorbol-ester/DAG-type 2 zinc-finger motif lies at 276 to 326 (PHTFVIHSYTRPTVCQFCKKLLKGLFRQGLQCKDCRFNCHKRCAPKVPNNC). Disordered regions lie at residues 338 to 362 (SPGAESDVVMEEGSDDNDSERNSGL) and 380 to 408 (EGQSDGAEMQDPDADQEDSNRTISPSTSN). 2 stretches are compositionally biased toward acidic residues: residues 345 to 355 (VVMEEGSDDND) and 387 to 396 (EMQDPDADQE). Ser351 carries the phosphoserine modification. A phosphoserine; by MAPK13 mark is found at Ser403 and Ser407. Positions 428-547 (TVMKEGWMVH…WEVAIQHALM (120 aa)) constitute a PH domain. Tyr438 carries the post-translational modification Phosphotyrosine. Position 454 is a phosphoserine (Ser454). Residue Tyr469 is modified to Phosphotyrosine; by ABL. Tyr508 carries the post-translational modification Phosphotyrosine. A Phosphoserine modification is found at Ser554. The 257-residue stretch at 589 to 845 (IFPDEVLGSG…VDKTLSHPWL (257 aa)) folds into the Protein kinase domain. Residues 595 to 603 (LGSGQFGIV) and Lys618 contribute to the ATP site. The Proton acceptor role is filled by Asp712. A Phosphoserine; by PKC/PRKCD modification is found at Ser744. Residue Ser748 is modified to Phosphoserine; by autocatalysis and PKC/PRKCD. Tyr755 is modified (phosphotyrosine). A Phosphoserine; by autocatalysis modification is found at Ser916.

This sequence belongs to the protein kinase superfamily. CAMK Ser/Thr protein kinase family. PKD subfamily. Interacts (via N-terminus) with ADAP1/CENTA1. Interacts with MAPK13. Interacts with DAPK1 in an oxidative stress-regulated manner. Interacts with USP28; the interaction induces phosphorylation of USP28 and activated KRAS-mediated stabilization of ZNF304. Interacts with AKAP13 (via C-terminal domain). Mg(2+) is required as a cofactor. Phosphorylated at Ser-403 and Ser-407 by MAPK13 during regulation of insulin secretion in pancreatic beta cells. Phosphorylated by DAPK1. Phosphorylated at Tyr-93 and by ABL at Tyr-469, which primes the kinase in response to oxidative stress, and promotes a second step activating phosphorylation at Ser-744/Ser-748 by PKRD. Phosphorylated on Ser-916 upon S.enterica infection in macrophages.

Its subcellular location is the cytoplasm. It localises to the cell membrane. The protein localises to the golgi apparatus. The protein resides in the trans-Golgi network. The catalysed reaction is L-seryl-[protein] + ATP = O-phospho-L-seryl-[protein] + ADP + H(+). It carries out the reaction L-threonyl-[protein] + ATP = O-phospho-L-threonyl-[protein] + ADP + H(+). Its activity is regulated as follows. Activated by DAG and phorbol esters. Phorbol-ester/DAG-type domain 1 binds DAG with high affinity and appears to play the dominant role in mediating translocation to the cell membrane and trans-Golgi network. Phorbol-ester/DAG-type domain 2 binds phorbol ester with higher affinity. Autophosphorylation of Ser-748 and phosphorylation of Ser-744 by PKC relieves auto-inhibition by the PH domain. Phosphorylation on Tyr-469 by the SRC-ABL1 pathway in response to oxidative stress, is also required for activation. Activated by DAPK1 under oxidative stress. Serine/threonine-protein kinase that converts transient diacylglycerol (DAG) signals into prolonged physiological effects downstream of PKC, and is involved in the regulation of MAPK8/JNK1 and Ras signaling, Golgi membrane integrity and trafficking, cell survival through NF-kappa-B activation, cell migration, cell differentiation by mediating HDAC7 nuclear export, cell proliferation via MAPK1/3 (ERK1/2) signaling, and plays a role in cardiac hypertrophy, VEGFA-induced angiogenesis, genotoxic-induced apoptosis and flagellin-stimulated inflammatory response. Phosphorylates the epidermal growth factor receptor (EGFR) on dual threonine residues, which leads to the suppression of epidermal growth factor (EGF)-induced MAPK8/JNK1 activation and subsequent JUN phosphorylation. Phosphorylates RIN1, inducing RIN1 binding to 14-3-3 proteins YWHAB, YWHAE and YWHAZ and increased competition with RAF1 for binding to GTP-bound form of Ras proteins (NRAS, HRAS and KRAS). Acts downstream of the heterotrimeric G-protein beta/gamma-subunit complex to maintain the structural integrity of the Golgi membranes, and is required for protein transport along the secretory pathway. In the trans-Golgi network (TGN), regulates the fission of transport vesicles that are on their way to the plasma membrane. May act by activating the lipid kinase phosphatidylinositol 4-kinase beta (PI4KB) at the TGN for the local synthesis of phosphorylated inositol lipids, which induces a sequential production of DAG, phosphatidic acid (PA) and lyso-PA (LPA) that are necessary for membrane fission and generation of specific transport carriers to the cell surface. Under oxidative stress, is phosphorylated at Tyr-469 via SRC-ABL1 and contributes to cell survival by activating IKK complex and subsequent nuclear translocation and activation of NFKB1. Involved in cell migration by regulating integrin alpha-5/beta-3 recycling and promoting its recruitment in newly forming focal adhesion. In osteoblast differentiation, mediates the bone morphogenetic protein 2 (BMP2)-induced nuclear export of HDAC7, which results in the inhibition of HDAC7 transcriptional repression of RUNX2. In neurons, plays an important role in neuronal polarity by regulating the biogenesis of TGN-derived dendritic vesicles, and is involved in the maintenance of dendritic arborization and Golgi structure in hippocampal cells. May potentiate mitogenesis induced by the neuropeptide bombesin or vasopressin by mediating an increase in the duration of MAPK1/3 (ERK1/2) signaling, which leads to accumulation of immediate-early gene products including FOS that stimulate cell cycle progression. Plays an important role in the proliferative response induced by low calcium in keratinocytes, through sustained activation of MAPK1/3 (ERK1/2) pathway. Downstream of novel PKC signaling, plays a role in cardiac hypertrophy by phosphorylating HDAC5, which in turn triggers XPO1/CRM1-dependent nuclear export of HDAC5, MEF2A transcriptional activation and induction of downstream target genes that promote myocyte hypertrophy and pathological cardiac remodeling. Mediates cardiac troponin I (TNNI3) phosphorylation at the PKA sites, which results in reduced myofilament calcium sensitivity, and accelerated crossbridge cycling kinetics. The PRKD1-HDAC5 pathway is also involved in angiogenesis by mediating VEGFA-induced specific subset of gene expression, cell migration, and tube formation. In response to VEGFA, is necessary and required for HDAC7 phosphorylation which induces HDAC7 nuclear export and endothelial cell proliferation and migration. During apoptosis induced by cytarabine and other genotoxic agents, PRKD1 is cleaved by caspase-3 at Asp-378, resulting in activation of its kinase function and increased sensitivity of cells to the cytotoxic effects of genotoxic agents. In epithelial cells, is required for transducing flagellin-stimulated inflammatory responses by binding and phosphorylating TLR5, which contributes to MAPK14/p38 activation and production of inflammatory cytokines. Acts as an activator of NLRP3 inflammasome assembly by mediating phosphorylation of NLRP3. May play a role in inflammatory response by mediating activation of NF-kappa-B. May be involved in pain transmission by directly modulating TRPV1 receptor. Plays a role in activated KRAS-mediated stabilization of ZNF304 in colorectal cancer (CRC) cells. Regulates nuclear translocation of transcription factor TFEB in macrophages upon live S.enterica infection. This Rattus norvegicus (Rat) protein is Serine/threonine-protein kinase D1 (Prkd1).